The primary structure comprises 461 residues: Adenosylmethionine-8-amino-7-oxononanoate aminotransferase (461 aa).

Residue 117 to 118 coordinates pyridoxal 5'-phosphate; sequence GA. Y150 is a binding site for substrate. Position 263 (D263) interacts with pyridoxal 5'-phosphate. Positions 296, 331, and 426 each coordinate substrate. At K296 the chain carries N6-(pyridoxal phosphate)lysine.

The protein belongs to the class-III pyridoxal-phosphate-dependent aminotransferase family. BioA subfamily. In terms of assembly, homodimer. The cofactor is pyridoxal 5'-phosphate.

It is found in the cytoplasm. It carries out the reaction (8S)-8-amino-7-oxononanoate + S-adenosyl-L-methionine = S-adenosyl-4-methylsulfanyl-2-oxobutanoate + (7R,8S)-7,8-diammoniononanoate. Its pathway is cofactor biosynthesis; biotin biosynthesis; 7,8-diaminononanoate from 8-amino-7-oxononanoate (SAM route): step 1/1. Functionally, catalyzes the transfer of the alpha-amino group from S-adenosyl-L-methionine (SAM) to 7-keto-8-aminopelargonic acid (KAPA) to form 7,8-diaminopelargonic acid (DAPA). It is the only aminotransferase known to utilize SAM as an amino donor. The protein is Adenosylmethionine-8-amino-7-oxononanoate aminotransferase of Methanocaldococcus jannaschii (strain ATCC 43067 / DSM 2661 / JAL-1 / JCM 10045 / NBRC 100440) (Methanococcus jannaschii).